Here is a 453-residue protein sequence, read N- to C-terminus: Chromosomal replication initiator protein DnaA (453 aa).

Residues 1-76 (MSGDAAALWP…LAWRQQLPAV (76 aa)) form a domain I, interacts with DnaA modulators region. Residues 76–115 (VRSVSVRGGVAATERAATLASVPLPTFDAPAAPAANPALL) are domain II. The tract at residues 116-333 (GFDPRLSFDR…GALNKLLAYA (218 aa)) is domain III, AAA+ region. Residues Gly160, Gly162, Lys163, and Thr164 each contribute to the ATP site. The tract at residues 334-453 (ALTGARIDLM…IAAIRRSLNS (120 aa)) is domain IV, binds dsDNA.

The protein belongs to the DnaA family. In terms of assembly, oligomerizes as a right-handed, spiral filament on DNA at oriC.

It is found in the cytoplasm. Functionally, plays an essential role in the initiation and regulation of chromosomal replication. ATP-DnaA binds to the origin of replication (oriC) to initiate formation of the DNA replication initiation complex once per cell cycle. Binds the DnaA box (a 9 base pair repeat at the origin) and separates the double-stranded (ds)DNA. Forms a right-handed helical filament on oriC DNA; dsDNA binds to the exterior of the filament while single-stranded (ss)DNA is stabiized in the filament's interior. The ATP-DnaA-oriC complex binds and stabilizes one strand of the AT-rich DNA unwinding element (DUE), permitting loading of DNA polymerase. After initiation quickly degrades to an ADP-DnaA complex that is not apt for DNA replication. Binds acidic phospholipids. This Sphingopyxis alaskensis (strain DSM 13593 / LMG 18877 / RB2256) (Sphingomonas alaskensis) protein is Chromosomal replication initiator protein DnaA.